The sequence spans 328 residues: Reticulocalbin-3 (328 aa).

The signal sequence occupies residues 1-20 (MMWRPSVLLLLLLLRHGAQG). Positions 19 to 49 (QGKPSPDAGPHGQGRVHQAAPLSDAPHDDAH) are disordered. EF-hand domains follow at residues 75 to 112 (ESQARLGRIVDRMDRAGDGDGWVSLAELRAWIAHTQQR), 113 to 148 (HIRDSVSAAWDTYDTDRDGRVGWEELRNATYGHYAP), 163 to 198 (KMLARDERRFRVADQDGDSMATREELTAFLHPEEFP), 200 to 235 (MRDIVIAETLEDLDRNKDGYVQVEEYIADLYSAEPG), 241 to 276 (WVQTERQQFRDFRDLNKDGHLDGSEVGHWVLPPAQD), and 277 to 312 (QPLVEANHLLHESDTDKDGRLSKAEILGNWNMFVGS). The Ca(2+) site is built by Asp92, Asp94, Trp96, Glu101, Asp126, Asp128, Asp130, Arg132, and Glu137. The N-linked (GlcNAc...) asparagine glycan is linked to Asn140. Asp176, Asp178, Asp180, Met182, Glu187, Asp213, Asn215, Asp217, Tyr219, Glu224, Asp254, Asn256, Asp258, His260, Glu265, Asp290, Asp292, Asp294, Arg296, and Glu301 together coordinate Ca(2+). The Prevents secretion from ER signature appears at 325–328 (HDEL).

Belongs to the CREC family. In terms of assembly, interacts with PCSK6 (immature form including the propeptide); probably involved in the maturation and the secretion of PCSK6. In terms of processing, degraded by PCSK6 and other endoproteases including FURIN and PCSK5. N-glycosylated. In terms of tissue distribution, widely expressed.

The protein resides in the endoplasmic reticulum lumen. In terms of biological role, probable molecular chaperone assisting protein biosynthesis and transport in the endoplasmic reticulum. Required for the proper biosynthesis and transport of pulmonary surfactant-associated protein A/SP-A, pulmonary surfactant-associated protein D/SP-D and the lipid transporter ABCA3. By regulating both the proper expression and the degradation through the endoplasmic reticulum-associated protein degradation pathway of these proteins plays a crucial role in pulmonary surfactant homeostasis. Has an anti-fibrotic activity by negatively regulating the secretion of type I and type III collagens. This calcium-binding protein also transiently associates with immature PCSK6 and regulates its secretion. This chain is Reticulocalbin-3, found in Homo sapiens (Human).